The sequence spans 128 residues: uncharacterized protein (128 aa).

The segment covering 1–28 has biased composition (basic and acidic residues); that stretch reads MDADDFGKKDLENGNESPKKPIFMKDWK. Residues 1 to 30 are disordered; the sequence is MDADDFGKKDLENGNESPKKPIFMKDWKNS.

It is found in the cytoplasm. It localises to the nucleus. This is an uncharacterized protein from Schizosaccharomyces pombe (strain 972 / ATCC 24843) (Fission yeast).